Here is a 207-residue protein sequence, read N- to C-terminus: Large ribosomal subunit protein uL4 (207 aa).

The interval 45–89 (RQGTHKVKTRSEVRGGGRKPWRQKGTGRARQGSIRSPQWRGGGTV) is disordered. The segment covering 60-71 (GGRKPWRQKGTG) has biased composition (basic residues).

Belongs to the universal ribosomal protein uL4 family. Part of the 50S ribosomal subunit.

Its function is as follows. One of the primary rRNA binding proteins, this protein initially binds near the 5'-end of the 23S rRNA. It is important during the early stages of 50S assembly. It makes multiple contacts with different domains of the 23S rRNA in the assembled 50S subunit and ribosome. In terms of biological role, forms part of the polypeptide exit tunnel. This Bacillus mycoides (strain KBAB4) (Bacillus weihenstephanensis) protein is Large ribosomal subunit protein uL4.